Consider the following 83-residue polypeptide: U20-theraphotoxin-Cg1a 2 (83 aa).

An N-terminal signal peptide occupies residues 1-21 (MQVSVLITLAVLGVMFVWTSA). Residues 22–47 (AELEERGSDQPAWLKSLERIFQSEER) constitute a propeptide that is removed on maturation. 3 cysteine pairs are disulfide-bonded: Cys49–Cys63, Cys56–Cys68, and Cys62–Cys76.

This sequence belongs to the neurotoxin 10 (Hwtx-1) family. 40 (Jztx-35) subfamily. As to expression, expressed by the venom gland.

It is found in the secreted. In terms of biological role, probable ion channel inhibitor. The sequence is that of U20-theraphotoxin-Cg1a 2 from Chilobrachys guangxiensis (Chinese earth tiger tarantula).